The primary structure comprises 277 residues: Thymidylate synthase (277 aa).

Arg21 lines the dUMP pocket. Position 51 (His51) interacts with (6R)-5,10-methylene-5,6,7,8-tetrahydrofolate. Position 139-140 (139-140 (RR)) interacts with dUMP. Catalysis depends on Cys159, which acts as the Nucleophile. Residues 179–182 (RSAD), Asn190, and 220–222 (HIY) contribute to the dUMP site. Asp182 contacts (6R)-5,10-methylene-5,6,7,8-tetrahydrofolate. Ala276 contributes to the (6R)-5,10-methylene-5,6,7,8-tetrahydrofolate binding site.

It belongs to the thymidylate synthase family. Bacterial-type ThyA subfamily. As to quaternary structure, homodimer.

The protein resides in the cytoplasm. The catalysed reaction is dUMP + (6R)-5,10-methylene-5,6,7,8-tetrahydrofolate = 7,8-dihydrofolate + dTMP. Its pathway is pyrimidine metabolism; dTTP biosynthesis. Functionally, catalyzes the reductive methylation of 2'-deoxyuridine-5'-monophosphate (dUMP) to 2'-deoxythymidine-5'-monophosphate (dTMP) while utilizing 5,10-methylenetetrahydrofolate (mTHF) as the methyl donor and reductant in the reaction, yielding dihydrofolate (DHF) as a by-product. This enzymatic reaction provides an intracellular de novo source of dTMP, an essential precursor for DNA biosynthesis. This Roseobacter denitrificans (strain ATCC 33942 / OCh 114) (Erythrobacter sp. (strain OCh 114)) protein is Thymidylate synthase.